The chain runs to 146 residues: Large ribosomal subunit protein uL15 (146 aa).

Basic and acidic residues predominate over residues 1–13; sequence MKLHELKPAEGSR. The tract at residues 1-51 is disordered; sequence MKLHELKPAEGSRKVRNRVGRGIGSGNGKTAGRGHKGQNARSGGGVRLGFE. 2 stretches are compositionally biased toward gly residues: residues 21-31 and 42-51; these read RGIGSGNGKTA and SGGGVRLGFE.

Belongs to the universal ribosomal protein uL15 family. In terms of assembly, part of the 50S ribosomal subunit.

Functionally, binds to the 23S rRNA. The sequence is that of Large ribosomal subunit protein uL15 from Bacillus mycoides (strain KBAB4) (Bacillus weihenstephanensis).